Reading from the N-terminus, the 379-residue chain is Leukocyte elastase inhibitor A (379 aa).

Position 300 is a phosphoserine (serine 300). Residues 351 to 379 (EFTVDHPFIFFIRHNPTSNVLFLGRVCSP) form a CARD-binding motif (CBM) region.

It belongs to the serpin family. Ov-serpin subfamily. Monomer. Interacts (via C-terminus) with CASP1 and CASP4 (via CARD domain); these interactions regulate the activity of inflammatory caspases. As to expression, ubiquitous with higher expression in pancreas, spleen and bone marrow.

The protein localises to the secreted. It localises to the cytoplasm. Its subcellular location is the cytolytic granule. The protein resides in the early endosome. Functionally, neutrophil serine protease inhibitor that plays an essential role in the regulation of the innate immune response, inflammation and cellular homeostasis. Acts primarily to protect the cell from proteases released in the cytoplasm during stress or infection. These proteases are important in killing microbes but when released from granules, these potent enzymes also destroy host proteins and contribute to mortality. Regulates the activity of the neutrophil proteases elastase, cathepsin G, proteinase-3, chymase, chymotrypsin, and kallikrein-3. Also acts as a potent intracellular inhibitor of granzyme H. During inflammation, limits the activity of inflammatory caspases CASP1 and CASP4 by suppressing their caspase-recruitment domain (CARD) oligomerization and enzymatic activation. In addition, promotes the proliferation of beta-cells when secreted. This Mus musculus (Mouse) protein is Leukocyte elastase inhibitor A (Serpinb1a).